Reading from the N-terminus, the 1024-residue chain is Protein translocase subunit SecA (1024 aa).

Residues Gln-143, 161–165 (GEGKT), and Asp-661 each bind ATP. The disordered stretch occupies residues 970–1024 (HEEAGSVYNAQPDGEPESQASKQQPVVADHSKPGRNDLCPCGSGKKYKNCHGREA). Zn(2+) contacts are provided by Cys-1008, Cys-1010, Cys-1019, and His-1020. Residues 1014–1024 (KKYKNCHGREA) show a composition bias toward basic residues.

The protein belongs to the SecA family. Monomer and homodimer. Part of the essential Sec protein translocation apparatus which comprises SecA, SecYEG and auxiliary proteins SecDF. Other proteins may also be involved. Requires Zn(2+) as cofactor.

Its subcellular location is the cell inner membrane. It localises to the cytoplasm. The enzyme catalyses ATP + H2O + cellular proteinSide 1 = ADP + phosphate + cellular proteinSide 2.. In terms of biological role, part of the Sec protein translocase complex. Interacts with the SecYEG preprotein conducting channel. Has a central role in coupling the hydrolysis of ATP to the transfer of proteins into and across the cell membrane, serving as an ATP-driven molecular motor driving the stepwise translocation of polypeptide chains across the membrane. This chain is Protein translocase subunit SecA, found in Chlorobium luteolum (strain DSM 273 / BCRC 81028 / 2530) (Pelodictyon luteolum).